Consider the following 537-residue polypeptide: MQLNPAEISELIKSRIEGLGVSADIRNQGTVVSVTDGIVRVHGLSDAMQGEMLEFPPTADGTPSFGLALNLERDSVGAVILGEYEHISEGGTVKCTGRILEVPVGPELIGRVVNALGQPIDGKGPINAKMTDVIEKVAPGVIARKSVDQPMQTGLKSIDSMVPVGRGQRELIIGDRQTGKTAVAIDAIINQKGQNMTCVYVAIGQKASSIKNVVRSLEQAGAMDYTIVVAASASESAAMQYVSAYSGCTMGEYFRDRGQDALIVYDDLSKQAVAYRQVSLLLRRPPGREAYPGDVFYLHSRLLERAARVNADYVEAFTKGAVKGKTGSLTALPIIETQAGDVSAFVPTNVISITDGQIFLETSLFNAGIRPAINAGISVSRVGSSAQTNLIKNQSGGIRTDLAQYRELAAFAQFASDLDEATRKQLDRGARVTELLKQTQYSPLPISLMNATLFAVNKGFTDDIDVKKVLPFEHGFHQLLKTSHAALLETMEKNGAKWDVKPAKPDDSAEKQAFKKVCQDAEAELLAAATSFKKSFA.

174–181 (GDRQTGKT) is an ATP binding site.

It belongs to the ATPase alpha/beta chains family. In terms of assembly, F-type ATPases have 2 components, CF(1) - the catalytic core - and CF(0) - the membrane proton channel. CF(1) has five subunits: alpha(3), beta(3), gamma(1), delta(1), epsilon(1). CF(0) has three main subunits: a(1), b(2) and c(9-12). The alpha and beta chains form an alternating ring which encloses part of the gamma chain. CF(1) is attached to CF(0) by a central stalk formed by the gamma and epsilon chains, while a peripheral stalk is formed by the delta and b chains.

The protein resides in the cell inner membrane. The enzyme catalyses ATP + H2O + 4 H(+)(in) = ADP + phosphate + 5 H(+)(out). Produces ATP from ADP in the presence of a proton gradient across the membrane. The alpha chain is a regulatory subunit. This is ATP synthase subunit alpha from Verminephrobacter eiseniae (strain EF01-2).